The following is a 61-amino-acid chain: Metallothionein-1 (61 aa).

Residue M1 is modified to N-acetylmethionine. The segment at 1–29 (MDPNCSCATGVSCTCADSCKCKECKCTSC) is beta. C5, C7, C13, C15, C19, C21, C24, C26, C29, C33, C34, C36, C37, C41, C44, C48, C50, C57, C59, and C60 together coordinate a divalent metal cation. Positions 30–61 (KKSCCSCCPVGCAKCAQGCVCKGASEKCNCCA) are alpha.

This sequence belongs to the metallothionein superfamily. Type 1 family.

Metallothioneins have a high content of cysteine residues that bind various heavy metals; these proteins are transcriptionally regulated by both heavy metals and glucocorticoids. This Chlorocebus aethiops (Green monkey) protein is Metallothionein-1 (MT1).